Here is a 114-residue protein sequence, read N- to C-terminus: Ribonuclease P protein component (114 aa).

This sequence belongs to the RnpA family. In terms of assembly, consists of a catalytic RNA component (M1 or rnpB) and a protein subunit.

The enzyme catalyses Endonucleolytic cleavage of RNA, removing 5'-extranucleotides from tRNA precursor.. Its function is as follows. RNaseP catalyzes the removal of the 5'-leader sequence from pre-tRNA to produce the mature 5'-terminus. It can also cleave other RNA substrates such as 4.5S RNA. The protein component plays an auxiliary but essential role in vivo by binding to the 5'-leader sequence and broadening the substrate specificity of the ribozyme. This Clostridioides difficile (strain 630) (Peptoclostridium difficile) protein is Ribonuclease P protein component.